The primary structure comprises 201 residues: 3-isopropylmalate dehydratase small subunit (201 aa).

The protein belongs to the LeuD family. LeuD type 1 subfamily. Heterodimer of LeuC and LeuD.

It catalyses the reaction (2R,3S)-3-isopropylmalate = (2S)-2-isopropylmalate. The protein operates within amino-acid biosynthesis; L-leucine biosynthesis; L-leucine from 3-methyl-2-oxobutanoate: step 2/4. Its function is as follows. Catalyzes the isomerization between 2-isopropylmalate and 3-isopropylmalate, via the formation of 2-isopropylmaleate. The polypeptide is 3-isopropylmalate dehydratase small subunit (Buchnera aphidicola subsp. Baizongia pistaciae (strain Bp)).